The chain runs to 338 residues: Eukaryotic translation initiation factor 3 subunit H (338 aa).

The MPN domain occupies V22–A154.

It belongs to the eIF-3 subunit H family. As to quaternary structure, component of the eukaryotic translation initiation factor 3 (eIF-3) complex. The eIF-3 complex interacts with pix. Interacts with mxt.

The protein resides in the cytoplasm. Functionally, component of the eukaryotic translation initiation factor 3 (eIF-3) complex, which is involved in protein synthesis of a specialized repertoire of mRNAs and, together with other initiation factors, stimulates binding of mRNA and methionyl-tRNAi to the 40S ribosome. The eIF-3 complex specifically targets and initiates translation of a subset of mRNAs involved in cell proliferation. The chain is Eukaryotic translation initiation factor 3 subunit H from Drosophila erecta (Fruit fly).